Consider the following 273-residue polypeptide: Hydroxyethylthiazole kinase 2 (273 aa).

Met-45 serves as a coordination point for substrate. ATP is bound by residues Lys-120 and Thr-173. A substrate-binding site is contributed by Gly-200.

This sequence belongs to the Thz kinase family. It depends on Mg(2+) as a cofactor.

The enzyme catalyses 5-(2-hydroxyethyl)-4-methylthiazole + ATP = 4-methyl-5-(2-phosphooxyethyl)-thiazole + ADP + H(+). It participates in cofactor biosynthesis; thiamine diphosphate biosynthesis; 4-methyl-5-(2-phosphoethyl)-thiazole from 5-(2-hydroxyethyl)-4-methylthiazole: step 1/1. Catalyzes the phosphorylation of the hydroxyl group of 4-methyl-5-beta-hydroxyethylthiazole (THZ). The polypeptide is Hydroxyethylthiazole kinase 2 (Leuconostoc mesenteroides subsp. mesenteroides (strain ATCC 8293 / DSM 20343 / BCRC 11652 / CCM 1803 / JCM 6124 / NCDO 523 / NBRC 100496 / NCIMB 8023 / NCTC 12954 / NRRL B-1118 / 37Y)).